Consider the following 200-residue polypeptide: Glycerol-3-phosphate acyltransferase (200 aa).

5 helical membrane-spanning segments follow: residues 2 to 22 (FNIP…AVIV), 51 to 71 (KAAA…VLLA), 84 to 104 (AIAA…FFGF), 114 to 134 (LGVL…IWLV), and 158 to 178 (LFFM…ILVL).

The protein belongs to the PlsY family. In terms of assembly, probably interacts with PlsX.

The protein resides in the cell inner membrane. The catalysed reaction is an acyl phosphate + sn-glycerol 3-phosphate = a 1-acyl-sn-glycero-3-phosphate + phosphate. It functions in the pathway lipid metabolism; phospholipid metabolism. Catalyzes the transfer of an acyl group from acyl-phosphate (acyl-PO(4)) to glycerol-3-phosphate (G3P) to form lysophosphatidic acid (LPA). This enzyme utilizes acyl-phosphate as fatty acyl donor, but not acyl-CoA or acyl-ACP. This chain is Glycerol-3-phosphate acyltransferase, found in Neisseria meningitidis serogroup A / serotype 4A (strain DSM 15465 / Z2491).